Here is a 392-residue protein sequence, read N- to C-terminus: Phosphopentomutase (392 aa).

Residues Asp-14, Asp-286, His-291, Asp-327, His-328, and His-339 each contribute to the Mn(2+) site.

The protein belongs to the phosphopentomutase family. The cofactor is Mn(2+).

It is found in the cytoplasm. The enzyme catalyses 2-deoxy-alpha-D-ribose 1-phosphate = 2-deoxy-D-ribose 5-phosphate. It catalyses the reaction alpha-D-ribose 1-phosphate = D-ribose 5-phosphate. The protein operates within carbohydrate degradation; 2-deoxy-D-ribose 1-phosphate degradation; D-glyceraldehyde 3-phosphate and acetaldehyde from 2-deoxy-alpha-D-ribose 1-phosphate: step 1/2. Isomerase that catalyzes the conversion of deoxy-ribose 1-phosphate (dRib-1-P) and ribose 1-phosphate (Rib-1-P) to deoxy-ribose 5-phosphate (dRib-5-P) and ribose 5-phosphate (Rib-5-P), respectively. The protein is Phosphopentomutase of Staphylococcus aureus (strain Mu3 / ATCC 700698).